We begin with the raw amino-acid sequence, 208 residues long: CASP-like protein 2A1 (208 aa).

Residues 1-36 (MEERSGVLETSRSCKQLIGPEGSDKEFEGYIDSNLR) are Cytoplasmic-facing. Residues 37–57 (VVETFLRLFPIGLCVTALVIM) form a helical membrane-spanning segment. Residues 58–79 (LKNSQENKYGSVSYTDLGAFRY) lie on the Extracellular side of the membrane. A helical membrane pass occupies residues 80-100 (LVHANGICAGYSLFSAIFVAL). Residues 101–107 (PRLSSVH) are Cytoplasmic-facing. Residues 108 to 128 (IAWTFFVLDQVLTYIILSAGA) form a helical membrane-spanning segment. Over 129–159 (ASAEVLYLAEKGNMATAWSSACRSFGPFCHK) the chain is Extracellular. The helical transmembrane segment at 160–180 (VTASTTITFVVVVFYVLLSLI) threads the bilayer. Residues 181–208 (SSYKLFSKYDAPTVSNPSMGADIVAFHG) lie on the Cytoplasmic side of the membrane.

Belongs to the Casparian strip membrane proteins (CASP) family. As to quaternary structure, homodimer and heterodimers.

The protein resides in the cell membrane. The polypeptide is CASP-like protein 2A1 (Glycine max (Soybean)).